Consider the following 362-residue polypeptide: Heat-inducible transcription repressor HrcA (362 aa).

Belongs to the HrcA family.

Its function is as follows. Negative regulator of class I heat shock genes (grpE-dnaK-dnaJ and groELS operons). Prevents heat-shock induction of these operons. The protein is Heat-inducible transcription repressor HrcA of Rhodopseudomonas palustris (strain BisB18).